We begin with the raw amino-acid sequence, 339 residues long: MIFIDACFKKETPYTPIWMMRQAGRYLSEYQESRKKAGSFLELCKNSDLATEVTLQPVEILGVDAAILFSDILVVPLEMGLDLEFIPKKGPHFLETITDLKSVDSLKVGAYKRLNYVYDTISQTRQKLSKDKALIGFCGSPWTLATYMIESEGSKSYAKSKKMLYSEPEVLHTLLEKLSAELIEYLSLQIQAGVNAVMIFDSWANALEKEAYLKFSWDYLKKISKELKKRYARIPVILFPKGVGAYLDSIDGEFDVFGVDWGTPLEMAKKILGDKYVLQGNLEPTRLYDKNALEEGVEKILKIMGNKGHIFNLGHGMLPDLPRENAKYLVQLVHNKTKH.

Residues Arg-21 to Arg-25, Asp-71, Tyr-147, Ser-202, and His-315 contribute to the substrate site.

Belongs to the uroporphyrinogen decarboxylase family. As to quaternary structure, homodimer.

The protein resides in the cytoplasm. The catalysed reaction is uroporphyrinogen III + 4 H(+) = coproporphyrinogen III + 4 CO2. It participates in porphyrin-containing compound metabolism; protoporphyrin-IX biosynthesis; coproporphyrinogen-III from 5-aminolevulinate: step 4/4. In terms of biological role, catalyzes the decarboxylation of four acetate groups of uroporphyrinogen-III to yield coproporphyrinogen-III. The chain is Uroporphyrinogen decarboxylase from Helicobacter acinonychis (strain Sheeba).